The sequence spans 91 residues: Small ribosomal subunit protein bS16 (91 aa).

It belongs to the bacterial ribosomal protein bS16 family.

This Staphylococcus epidermidis (strain ATCC 35984 / DSM 28319 / BCRC 17069 / CCUG 31568 / BM 3577 / RP62A) protein is Small ribosomal subunit protein bS16.